A 139-amino-acid polypeptide reads, in one-letter code: MSWSGLLRGLSMSLNYGLALAPRPWGTRPMATLNQLHRRGPPKFPPSKPGPTEGRPQLKGVVLRTFIRKPKKPNSANRKCCRVRLSTGREAVCFIPGEGHNLQEHHVVLVQGGRTQDLPGVKLKVVRGKYDCGHVQKKK.

The N-terminal 29 residues, 1–29 (MSWSGLLRGLSMSLNYGLALAPRPWGTRP), are a transit peptide targeting the mitochondrion. A disordered region spans residues 37-57 (HRRGPPKFPPSKPGPTEGRPQ).

This sequence belongs to the universal ribosomal protein uS12 family. In terms of assembly, component of the mitochondrial ribosome small subunit (28S) which comprises a 12S rRNA and about 30 distinct proteins.

The protein resides in the mitochondrion. This chain is Small ribosomal subunit protein uS12m (MRPS12), found in Bos taurus (Bovine).